The primary structure comprises 149 residues: Protein Rv2250A (149 aa).

This chain is Protein Rv2250A, found in Mycobacterium tuberculosis (strain ATCC 25618 / H37Rv).